A 208-amino-acid chain; its full sequence is 3-demethoxyubiquinol 3-hydroxylase (208 aa).

Residues E57, E87, H90, E139, E171, and H174 each contribute to the Fe cation site.

The protein belongs to the COQ7 family. It depends on Fe cation as a cofactor.

Its subcellular location is the cell membrane. The catalysed reaction is a 5-methoxy-2-methyl-3-(all-trans-polyprenyl)benzene-1,4-diol + AH2 + O2 = a 3-demethylubiquinol + A + H2O. The protein operates within cofactor biosynthesis; ubiquinone biosynthesis. Functionally, catalyzes the hydroxylation of 2-nonaprenyl-3-methyl-6-methoxy-1,4-benzoquinol during ubiquinone biosynthesis. In Nitrosomonas europaea (strain ATCC 19718 / CIP 103999 / KCTC 2705 / NBRC 14298), this protein is 3-demethoxyubiquinol 3-hydroxylase.